The chain runs to 410 residues: F-box protein At5g36730 (410 aa).

The 46-residue stretch at 1-46 (MAMSNLPRDLLEEVLSRVPVKSIAAVRSTCKNWNSLTYGQSFTKKL) folds into the F-box domain.

The sequence is that of F-box protein At5g36730 from Arabidopsis thaliana (Mouse-ear cress).